The following is a 319-amino-acid chain: Acetyl-coenzyme A carboxylase carboxyl transferase subunit alpha (319 aa).

In terms of domain architecture, CoA carboxyltransferase C-terminal spans 43–296 (LKQKSVELTQ…KTQLLLDLVE (254 aa)).

Belongs to the AccA family. Acetyl-CoA carboxylase is a heterohexamer composed of biotin carboxyl carrier protein (AccB), biotin carboxylase (AccC) and two subunits each of ACCase subunit alpha (AccA) and ACCase subunit beta (AccD).

It is found in the cytoplasm. The enzyme catalyses N(6)-carboxybiotinyl-L-lysyl-[protein] + acetyl-CoA = N(6)-biotinyl-L-lysyl-[protein] + malonyl-CoA. It functions in the pathway lipid metabolism; malonyl-CoA biosynthesis; malonyl-CoA from acetyl-CoA: step 1/1. In terms of biological role, component of the acetyl coenzyme A carboxylase (ACC) complex. First, biotin carboxylase catalyzes the carboxylation of biotin on its carrier protein (BCCP) and then the CO(2) group is transferred by the carboxyltransferase to acetyl-CoA to form malonyl-CoA. The chain is Acetyl-coenzyme A carboxylase carboxyl transferase subunit alpha from Blochmanniella floridana.